A 286-amino-acid chain; its full sequence is Pantothenate synthetase (286 aa).

30–37 (MGNLHEGH) lines the ATP pocket. The Proton donor role is filled by H37. Q64 provides a ligand contact to (R)-pantoate. Residue Q64 participates in beta-alanine binding. Residue 151 to 154 (GKKD) participates in ATP binding. Q157 is a (R)-pantoate binding site. ATP contacts are provided by residues L180 and 188 to 191 (LSSR).

Belongs to the pantothenate synthetase family. As to quaternary structure, homodimer.

The protein localises to the cytoplasm. The catalysed reaction is (R)-pantoate + beta-alanine + ATP = (R)-pantothenate + AMP + diphosphate + H(+). Its pathway is cofactor biosynthesis; (R)-pantothenate biosynthesis; (R)-pantothenate from (R)-pantoate and beta-alanine: step 1/1. Catalyzes the condensation of pantoate with beta-alanine in an ATP-dependent reaction via a pantoyl-adenylate intermediate. This chain is Pantothenate synthetase, found in Leptothrix cholodnii (strain ATCC 51168 / LMG 8142 / SP-6) (Leptothrix discophora (strain SP-6)).